A 429-amino-acid polypeptide reads, in one-letter code: Phosphoribosylamine--glycine ligase (429 aa).

Residues 109–316 (KDFLARHQIP…LVDLCLAACD (208 aa)) form the ATP-grasp domain. Residue 135–196 (LREKGAPIVI…EEFLDGEEAS (62 aa)) coordinates ATP. Positions 286 and 288 each coordinate Mg(2+).

Belongs to the GARS family. In terms of assembly, monomer. Requires Mg(2+) as cofactor. Mn(2+) is required as a cofactor.

The catalysed reaction is 5-phospho-beta-D-ribosylamine + glycine + ATP = N(1)-(5-phospho-beta-D-ribosyl)glycinamide + ADP + phosphate + H(+). It participates in purine metabolism; IMP biosynthesis via de novo pathway; N(1)-(5-phospho-D-ribosyl)glycinamide from 5-phospho-alpha-D-ribose 1-diphosphate: step 2/2. The polypeptide is Phosphoribosylamine--glycine ligase (Salmonella typhimurium (strain LT2 / SGSC1412 / ATCC 700720)).